A 2440-amino-acid chain; its full sequence is Nuclear receptor corepressor 1 (2440 aa).

The span at 1 to 18 (MSSSGYPPNQGAFSTEQS) shows a compositional bias: polar residues. 2 disordered regions span residues 1–177 (MSSS…SKLS) and 206–231 (QQQL…VEQK). Positions 1–373 (MSSSGYPPNQ…QRGAGLSATI (373 aa)) are interaction with ZBTB33 and HEXIM1. The span at 51–64 (SQASQLLQQQQQQQ) shows a compositional bias: low complexity. Basic and acidic residues-rich tracts occupy residues 77 to 88 (PGSDRPQERRTS), 99 to 119 (VDHD…DSHF), and 141 to 155 (ADAK…KHEA). Ser172 is modified (phosphoserine). Residues 174-216 (SKLSKEELIQSMDRVDREIAKVEQQILKLKKKQQQLEEEAAKP) are a coiled coil. Over residues 212-221 (EAAKPPEPEK) the composition is skewed to basic and acidic residues. Phosphoserine is present on Ser224. The tract at residues 254 to 312 (FEGLGPKVELPLYNQPSDTKVYHENIKTNQVMRKKLILFFKRRNHARKQREQKICQRYD) is interaction with SIN3A/B. Positions 299–328 (ARKQREQKICQRYDQLMEAWEKKVDRIENN) form a coiled coil. Residues 435-486 (QFMNVWTDHEKEIFKDKFIQHPKNFGLIASYLERKSVPDCVLYYYLTKKNEN) enclose the SANT 1 domain. 2 disordered regions span residues 497 to 632 (KRRG…TEEE) and 677 to 915 (NLLQ…GSIL). A coiled-coil region spans residues 501–557 (RNQQIARPSQEEKVEEKEEDKAEKTEKKEEEKKDEEEKDEKEDSKENTKEKDKIDGT). Composition is skewed to basic and acidic residues over residues 509–531 (SQEE…KEEE) and 541–556 (KEDS…KIDG). Residues 592–605 (EAAAASAAAAAATE) show a composition bias toward low complexity. The segment covering 606 to 617 (EPPPPLPPPPEP) has biased composition (pro residues). In terms of domain architecture, SANT 2 spans 623–674 (VETSRWTEEEMEVAKKGLVEHGRNWAAIAKMVGTKSEAQCKNFYFNYKRRHN). Residues 698–708 (QCESVASTVSA) are compositionally biased toward polar residues. Residues 709 to 728 (QEDEDIEASNEEENPEDSEV) show a composition bias toward acidic residues. Over residues 752–768 (ELEPTTETAPSTSPSLA) the composition is skewed to low complexity. The segment covering 781–792 (ETQVNDSISAET) has biased composition (polar residues). Residues 820–859 (DSVDVEVRVPENHASKVEGDNTKERDLDRASEKVEPRDED) are compositionally biased toward basic and acidic residues. Composition is skewed to polar residues over residues 864–883 (QQIN…SATC) and 906–915 (SLLNPTGSIL). Positions 988–1816 (RSSTSPCGTS…QGLPASRYNT (829 aa)) are interaction with ETO. Ser999 is modified (phosphoserine). Residues 1022–1046 (VRLPTTRPTRPPPPLIPSSKTTVAS) are disordered. Lys1106 is covalently cross-linked (Glycyl lysine isopeptide (Lys-Gly) (interchain with G-Cter in SUMO1); alternate). Lys1106 participates in a covalent cross-link: Glycyl lysine isopeptide (Lys-Gly) (interchain with G-Cter in SUMO2); alternate. At Ser1111 the chain carries Phosphoserine. Residue Lys1184 forms a Glycyl lysine isopeptide (Lys-Gly) (interchain with G-Cter in SUMO2) linkage. The segment at 1184–1204 (KGSISRMPIEDSSPEKGREEA) is disordered. A phosphoserine mark is found at Ser1195, Ser1196, Ser1249, Ser1263, Ser1281, and Ser1322. Lys1336 is modified (N6-acetyllysine). Thr1367 carries the phosphothreonine modification. Lys1389 participates in a covalent cross-link: Glycyl lysine isopeptide (Lys-Gly) (interchain with G-Cter in SUMO2). Lys1412 participates in a covalent cross-link: Glycyl lysine isopeptide (Lys-Gly) (interchain with G-Cter in SUMO2); alternate. At Lys1412 the chain carries N6-acetyllysine; alternate. The interval 1440–1459 (AGETVRSRHTSVVSSGPSVL) is disordered. 2 positions are modified to phosphoserine: Ser1450 and Ser1472. Over residues 1488–1512 (YQNTMSRGSPMMNRTSDVTISSNKS) the composition is skewed to polar residues. Positions 1488–1554 (YQNTMSRGSP…SPFDPHHRGS (67 aa)) are disordered. Residues 1501–2440 (RTSDVTISSN…QYETLSDSDD (940 aa)) form an interaction with C1D region. A Glycyl lysine isopeptide (Lys-Gly) (interchain with G-Cter in SUMO2) cross-link involves residue Lys1518. Phosphoserine is present on Ser1592. 2 disordered regions span residues 1690 to 1759 (PRPY…SPSP) and 1884 to 1922 (SSAF…LRTR). Basic and acidic residues-rich tracts occupy residues 1712-1729 (AERE…RERI) and 1903-1921 (AGKD…ELRT). The short motif at 1933 to 1937 (IDVII) is the CORNR box 1 element. The disordered stretch occupies residues 1943 to 1969 (SDKDARERGSQSSDSSSSLSSHRYETP). Positions 1952–1963 (SQSSDSSSSLSS) are enriched in low complexity. A phosphoserine mark is found at Ser1977 and Ser1981. The tract at residues 2006–2041 (PTRQYEGPLHHYRPQQESPSPQQQLPPSSQAEGMGQ) is disordered. Over residues 2020–2035 (QQESPSPQQQLPPSSQ) the composition is skewed to low complexity. Residues 2032 to 2115 (PSSQAEGMGQ…QAQSVHHQRP (84 aa)) are ID1. Residues 2047-2050 (RLIT) are required for interaction with RARA in the absence of its ligand. Residues 2055–2059 (ICQII) carry the CORNR box 2 motif. A compositionally biased stretch (low complexity) spans 2067–2086 (QVSSQTPQQPPTSTFQNSPS). The tract at residues 2067–2155 (QVSSQTPQQP…PYEPISPPQV (89 aa)) is disordered. The span at 2087–2110 (ALVSTPVRTKTSNRYSPESQAQSV) shows a compositional bias: polar residues. 5 positions are modified to phosphoserine: Ser2102, Ser2120, Ser2136, Ser2151, and Ser2184. Positions 2124 to 2142 (LVDKSRGSRPGKSPERSHV) are enriched in basic and acidic residues. The ID2 stretch occupies residues 2212-2273 (IFRKLNSSGG…EDIIRKALMG (62 aa)). Residues 2263-2267 (LEDII) carry the CORNR box 3 motif. The disordered stretch occupies residues 2287-2440 (SQPMGVVPGT…QYETLSDSDD (154 aa)). Residues 2296 to 2305 (TANTSVVTSG) show a composition bias toward polar residues. Thr2399 is modified (phosphothreonine). Composition is skewed to polar residues over residues 2407–2418 (AVNQAAPHQQNR) and 2431–2440 (QYETLSDSDD). 2 positions are modified to phosphoserine: Ser2436 and Ser2438.

Belongs to the N-CoR nuclear receptor corepressors family. As to quaternary structure, forms a large corepressor complex that contains SIN3A/B and histone deacetylases HDAC1 and HDAC2. This complex associates with the thyroid receptor (TR) and the retinoid acid receptor (RAR) in the absence of ligand. Interacts directly with RARA; the interaction is facilitated with RARA trimethylation. Component of the N-Cor repressor complex, at least composed of CBFA2T3, HEXIM1, NCOR1, NCOR2, HDAC3, TBL1X, TBL1XR1, CORO2A and GPS2. Interacts with ZBTB33; the interaction serves to recruit the N-CoR complex to promoter regions containing methylated CpG dinucleotides. Interacts with TRIM28 and KDM3A. Interacts (via the RD1 domain) with BAZ1A (via its N-terminal); the interaction corepresses a number of NCOR1-regulated genes. Interacts with BCL6, C1D, DACH1, HEXIM1, HDAC7, RORA, RORC, SAP30, SIAH2, SIN3A and SIN3B. May interact with DEAF1. Interacts with RXRA. Interacts with SETD5. Interacts with VDR. Interacts with ZBTB7A. Interacts with AR. Interacts with HDAC3. In terms of processing, ubiquitinated; mediated by SIAH2 and leading to its subsequent proteasomal degradation.

It localises to the nucleus. In terms of biological role, mediates transcriptional repression by certain nuclear receptors. Part of a complex which promotes histone deacetylation and the formation of repressive chromatin structures which may impede the access of basal transcription factors. Participates in the transcriptional repressor activity produced by BCL6. Recruited by ZBTB7A to the androgen response elements/ARE on target genes, negatively regulates androgen receptor signaling and androgen-induced cell proliferation. Mediates the NR1D1-dependent repression and circadian regulation of TSHB expression. The NCOR1-HDAC3 complex regulates the circadian expression of the core clock gene ARTNL/BMAL1 and the genes involved in lipid metabolism in the liver. The protein is Nuclear receptor corepressor 1 (NCOR1) of Homo sapiens (Human).